Consider the following 1647-residue polypeptide: Cortactin-binding protein 2 (1647 aa).

Disordered stretches follow at residues 1-27, 202-222, 318-427, 440-468, and 482-604; these read MATD…AEAA, EKKK…RSTE, HVKK…QPGL, GNAN…RDNL, and LSRF…PSID. Residues 120–276 adopt a coiled-coil conformation; it reads KMQERMATQL…EQLKRGSDSK (157 aa). The span at 362–372 shows a compositional bias: low complexity; it reads SSAPSLPPASA. The segment covering 379–388 has biased composition (polar residues); that stretch reads GPSTGSTADL. The segment covering 389-411 has biased composition (low complexity); it reads PSSTAPAPGSAAQSPVAAALGPA. Residues 440–466 show a composition bias toward polar residues; sequence GNANDPDQNGNTTQSPPSRDVSPTSRD. Residue arginine 484 is modified to Asymmetric dimethylarginine. Residues 488-509 show a composition bias toward low complexity; that stretch reads PAVGAAPRPGAPPTGDAGAYPP. Polar residues predominate over residues 569 to 579; it reads TVASPPSSLPQ. 5 ANK repeats span residues 695-725, 729-758, 762-791, 795-824, and 828-857; these read GRPT…DINY, DGHS…QVNA, NGFT…NINH, GGQT…DRSV, and DGWT…PAHG. Residues 856-886 are disordered; it reads HGNSLNEEEPESDVSDLDDGEESSEGESKPV. The span at 861 to 880 shows a compositional bias: acidic residues; sequence NEEEPESDVSDLDDGEESSE. The stretch at 898 to 928 is one ANK 6 repeat; it reads EGWTAAHIAASKGFKNCLEILCRHRGLEPER. The tract at residues 1436 to 1467 is disordered; it reads ENGAWRKVNTSPRRKSGRFSSPTWNKPDLSNE. Serine 1509 is modified (phosphoserine). The segment at 1542–1647 is disordered; it reads RTFDSSGNNP…HKNEQTHRKT (106 aa). 2 stretches are compositionally biased toward polar residues: residues 1544 to 1559 and 1567 to 1584; these read FDSS…TVNN and KEVS…SNNK. Over residues 1609-1623 the composition is skewed to low complexity; sequence SQNTKRSSSSSNTRQ. Basic and acidic residues predominate over residues 1630–1647; it reads SKEENWNLHKNEQTHRKT.

As to quaternary structure, interacts with CTTN/cortactin SH3 domain. Interacts with STRN, STRN4/zinedin and MOB4/phocein; this interactions mediate the association with the STRIPAK core complex and may regulate dendritic spine distribution of the STRIPAK complex in hippocampal neurons. Activation of glutamate receptors weakens the interaction with STRN and STRN4.

The protein resides in the cytoplasm. It localises to the cell cortex. Its subcellular location is the cell projection. The protein localises to the dendritic spine. In terms of biological role, regulates the dendritic spine distribution of CTTN/cortactin in hippocampal neurons, and thus controls dendritic spinogenesis and dendritic spine maintenance. Associates with the striatin-interacting phosphatase and kinase (STRIPAK) core complex to regulate dendritic spine distribution of the STRIPAK complex in hippocampal neurons. The chain is Cortactin-binding protein 2 (CTTNBP2) from Microcebus murinus (Gray mouse lemur).